The primary structure comprises 1407 residues: DNA-directed RNA polymerase subunit beta' (1407 aa).

Residues Cys-70, Cys-72, Cys-85, and Cys-88 each coordinate Zn(2+). Asp-460, Asp-462, and Asp-464 together coordinate Mg(2+). Cys-814, Cys-888, Cys-895, and Cys-898 together coordinate Zn(2+). Residue Lys-972 is modified to N6-acetyllysine.

This sequence belongs to the RNA polymerase beta' chain family. As to quaternary structure, the RNAP catalytic core consists of 2 alpha, 1 beta, 1 beta' and 1 omega subunit. When a sigma factor is associated with the core the holoenzyme is formed, which can initiate transcription. Mg(2+) serves as cofactor. The cofactor is Zn(2+).

It carries out the reaction RNA(n) + a ribonucleoside 5'-triphosphate = RNA(n+1) + diphosphate. Its function is as follows. DNA-dependent RNA polymerase catalyzes the transcription of DNA into RNA using the four ribonucleoside triphosphates as substrates. This chain is DNA-directed RNA polymerase subunit beta', found in Shigella boydii serotype 18 (strain CDC 3083-94 / BS512).